A 128-amino-acid chain; its full sequence is Probable prefoldin subunit 6 (128 aa).

This sequence belongs to the prefoldin subunit beta family. As to quaternary structure, heterohexamer of two PFD-alpha type and four PFD-beta type subunits.

It is found in the cytoplasm. Functionally, binds specifically to cytosolic chaperonin (c-CPN) and transfers target proteins to it. Binds to nascent polypeptide chain and promotes folding in an environment in which there are many competing pathways for nonnative proteins. Required for positioning of the mitotic spindle. The polypeptide is Probable prefoldin subunit 6 (Caenorhabditis briggsae).